The primary structure comprises 1583 residues: Spike glycoprotein (1583 aa).

An N-terminal signal peptide occupies residues 1–20 (MFLCFCTAPILCLWINSGGA). Topologically, residues 21-1553 (VVVSNESLVV…YGLIPAWITW (1533 aa)) are virion surface. N-linked (GlcNAc...) asparagine; by host glycans are attached at residues N25, N82, N252, N384, N494, N573, N842, N936, N970, N1268, N1299, N1387, N1391, N1430, N1433, N1440, N1485, N1489, N1497, and N1517. The chain crosses the membrane as a helical span at residues 1554–1574 (LTLGFSLFSILISGVNIILFF). The Intravirion portion of the chain corresponds to 1575-1583 (EMNGKVKKS).

It belongs to the torovirinae spike protein family. As to quaternary structure, homotrimer.

The protein localises to the virion membrane. In terms of biological role, mediates the binding of virions to the host cell receptor and is involved in membrane fusion. This is Spike glycoprotein (S) from Breda virus 1 (BRV-1).